We begin with the raw amino-acid sequence, 197 residues long: Glycerol-3-phosphate acyltransferase (197 aa).

The next 5 membrane-spanning stretches (helical) occupy residues 2–22 (LDVI…AIVV), 53–73 (AGIT…LAWL), 78–98 (PVVA…PVYF), 112–132 (VILA…LAVA), and 152–174 (YMLW…AAIV).

The protein belongs to the PlsY family. In terms of assembly, probably interacts with PlsX.

The protein localises to the cell inner membrane. It carries out the reaction an acyl phosphate + sn-glycerol 3-phosphate = a 1-acyl-sn-glycero-3-phosphate + phosphate. The protein operates within lipid metabolism; phospholipid metabolism. Catalyzes the transfer of an acyl group from acyl-phosphate (acyl-PO(4)) to glycerol-3-phosphate (G3P) to form lysophosphatidic acid (LPA). This enzyme utilizes acyl-phosphate as fatty acyl donor, but not acyl-CoA or acyl-ACP. This is Glycerol-3-phosphate acyltransferase from Halorhodospira halophila (strain DSM 244 / SL1) (Ectothiorhodospira halophila (strain DSM 244 / SL1)).